A 77-amino-acid polypeptide reads, in one-letter code: Protein ImpC (77 aa).

The protein belongs to the DinI family.

The sequence is that of Protein ImpC (impC) from Salmonella typhimurium.